A 545-amino-acid chain; its full sequence is Cleavage and polyadenylation specificity factor subunit 6 (545 aa).

Residues isoleucine 37–proline 69 are disordered. Residues isoleucine 81–lysine 161 form the RRM domain. Over residues serine 165–methionine 180 the composition is skewed to polar residues. 2 disordered regions span residues serine 165 to glutamate 404 and tyrosine 478 to arginine 545. Gly residues predominate over residues glycine 184 to proline 200. Pro residues-rich tracts occupy residues proline 220 to phenylalanine 230, proline 237 to glycine 265, proline 287 to asparagine 363, and glycine 372 to proline 383. Composition is skewed to basic and acidic residues over residues proline 384–alanine 397 and glycine 483–arginine 497. Basic residues predominate over residues glutamate 498–arginine 508. Positions aspartate 509–arginine 545 are enriched in basic and acidic residues.

It belongs to the RRM CPSF6/7 family. Component of the cleavage factor Im (CFIm) complex.

Its subcellular location is the nucleus. The protein localises to the nucleoplasm. The protein resides in the nucleus speckle. It localises to the cytoplasm. Its function is as follows. Component of the cleavage factor Im (CFIm) complex that functions as an activator of the pre-mRNA 3'-end cleavage and polyadenylation processing required for the maturation of pre-mRNA into functional mRNAs. CFIm contributes to the recruitment of multiprotein complexes on specific sequences on the pre-mRNA 3'-end, so called cleavage and polyadenylation signals (pA signals). Most pre-mRNAs contain multiple pA signals, resulting in alternative cleavage and polyadenylation (APA) producing mRNAs with variable 3'-end formation. The CFIm complex acts as a key regulator of cleavage and polyadenylation site choice during APA through its binding to 5'-UGUA-3' elements localized in the 3'-untranslated region (UTR) for a huge number of pre-mRNAs. Plays a role in mRNA export. The sequence is that of Cleavage and polyadenylation specificity factor subunit 6 from Danio rerio (Zebrafish).